An 87-amino-acid polypeptide reads, in one-letter code: Cell division protein FtsL (87 aa).

The Cytoplasmic portion of the chain corresponds to 1 to 3 (MSR). A helical membrane pass occupies residues 4–23 (LLLIVLLACSIASAIGVVYM). Residues 24 to 87 (RHMHRKLFVQ…ETSDIVVIRP (64 aa)) are Periplasmic-facing.

This sequence belongs to the FtsL family. Part of a complex composed of FtsB, FtsL and FtsQ.

It is found in the cell inner membrane. Its function is as follows. Essential cell division protein. May link together the upstream cell division proteins, which are predominantly cytoplasmic, with the downstream cell division proteins, which are predominantly periplasmic. The sequence is that of Cell division protein FtsL from Xanthomonas campestris pv. campestris (strain ATCC 33913 / DSM 3586 / NCPPB 528 / LMG 568 / P 25).